The primary structure comprises 302 residues: Aspartate carbamoyltransferase catalytic subunit (302 aa).

Carbamoyl phosphate contacts are provided by Arg-53 and Thr-54. Position 82 (Lys-82) interacts with L-aspartate. 3 residues coordinate carbamoyl phosphate: Arg-103, His-131, and Gln-134. L-aspartate contacts are provided by Arg-164 and Arg-223. The carbamoyl phosphate site is built by Leu-260 and Pro-261.

The protein belongs to the aspartate/ornithine carbamoyltransferase superfamily. ATCase family. As to quaternary structure, heterooligomer of catalytic and regulatory chains.

It catalyses the reaction carbamoyl phosphate + L-aspartate = N-carbamoyl-L-aspartate + phosphate + H(+). Its pathway is pyrimidine metabolism; UMP biosynthesis via de novo pathway; (S)-dihydroorotate from bicarbonate: step 2/3. Functionally, catalyzes the condensation of carbamoyl phosphate and aspartate to form carbamoyl aspartate and inorganic phosphate, the committed step in the de novo pyrimidine nucleotide biosynthesis pathway. This chain is Aspartate carbamoyltransferase catalytic subunit, found in Methanococcus vannielii (strain ATCC 35089 / DSM 1224 / JCM 13029 / OCM 148 / SB).